Consider the following 1131-residue polypeptide: PPi-type phosphoenolpyruvate carboxykinase (1131 aa).

This sequence belongs to the PPi-type phosphoenolpyruvate carboxykinase family. In terms of assembly, monomer and trimer; forms heterotrimers with PEPCK2 and PEPCK3.

The enzyme catalyses oxaloacetate + diphosphate = phosphoenolpyruvate + phosphate + CO2. Functionally, inorganic pyrophosphate (PPi)-dependent phosphoenolpyruvate carboxykinase, which regulates the carbon flow of the central metabolism by fixing CO(2) to phosphoenolpyruvate to produce oxaloacetate. Can also produce pyruvate and diphosphate from phosphoenolpyruvate and phosphate. This Propionibacterium freudenreichii subsp. freudenreichii protein is PPi-type phosphoenolpyruvate carboxykinase.